The sequence spans 460 residues: MEINKIIEINNNNNNNNNKIIENNNDNKKIIEINNNNNDNNKIIEINDNNNNNIKDKILKKENKDSILMKPPPIFITPANKDDTITVFHQGHIISIPRKLKINLKSITDCGPDGVMFRAKNEDSKEEVIVKKISVFLMKDDKMARKLLRNLLFQRHFQQHPLVSTFQSVFKRKSSENYLISNKNNRNNVRLPLLQQKGDDDIYFEYLLPEFTLLQMIHNKLLTEYNIMIFLYQLLTVVKFMHSAGVIHRDIDPSAITIDQNQCLKLTEFYFCFPSNCPVDLFFNDYDTSSFIYRAPETIWRNTTYTTAIDVWNIGVIFGEMILGKRLFKTQDFEDHLISISKLIGNPTAEDLSIVLSKSIFQYMEKIPKSTLTPSVGIKRRFKGASKDQIELLQGMLCWDPRKRMTIDQLLAHKYFSTIHDESMQIKCNEIFNLKYYPDFYKMKSDLVKKSIENEFLTPC.

Residues 102 to 416 (INLKSITDCG…IDQLLAHKYF (315 aa)) form the Protein kinase domain. Residues K131 and 154–162 (QRHFQQHPL) contribute to the ATP site. D250 functions as the Proton acceptor in the catalytic mechanism.

It belongs to the protein kinase superfamily. CMGC Ser/Thr protein kinase family. MAP kinase subfamily.

It carries out the reaction L-seryl-[protein] + ATP = O-phospho-L-seryl-[protein] + ADP + H(+). It catalyses the reaction L-threonyl-[protein] + ATP = O-phospho-L-threonyl-[protein] + ADP + H(+). This chain is Probable serine/threonine-protein kinase kinase DDB_G0280557, found in Dictyostelium discoideum (Social amoeba).